The primary structure comprises 341 residues: Anthranilate phosphoribosyltransferase (341 aa).

5-phospho-alpha-D-ribose 1-diphosphate contacts are provided by residues Gly-84, 94–97 (NVST), 112–120 (KHGGRAASS), and Ser-124. Gly-84 contributes to the anthranilate binding site. Position 96 (Ser-96) interacts with Mg(2+). Arg-170 contacts anthranilate. Residues Asp-229 and Glu-230 each coordinate Mg(2+).

It belongs to the anthranilate phosphoribosyltransferase family. As to quaternary structure, homodimer. Mg(2+) serves as cofactor.

It carries out the reaction N-(5-phospho-beta-D-ribosyl)anthranilate + diphosphate = 5-phospho-alpha-D-ribose 1-diphosphate + anthranilate. It participates in amino-acid biosynthesis; L-tryptophan biosynthesis; L-tryptophan from chorismate: step 2/5. Functionally, catalyzes the transfer of the phosphoribosyl group of 5-phosphorylribose-1-pyrophosphate (PRPP) to anthranilate to yield N-(5'-phosphoribosyl)-anthranilate (PRA). In Methylobacillus flagellatus (strain ATCC 51484 / DSM 6875 / VKM B-1610 / KT), this protein is Anthranilate phosphoribosyltransferase.